The following is a 64-amino-acid chain: Large ribosomal subunit protein uL30 (64 aa).

Part of the 50S ribosomal subunit. Post-translationally, the protein is methylated on either Ala-2 or Lys-3.

This is Large ribosomal subunit protein uL30 from Rhodopseudomonas palustris (strain ATCC BAA-98 / CGA009).